Here is a 258-residue protein sequence, read N- to C-terminus: Indole-3-glycerol phosphate synthase (258 aa).

Belongs to the TrpC family.

The catalysed reaction is 1-(2-carboxyphenylamino)-1-deoxy-D-ribulose 5-phosphate + H(+) = (1S,2R)-1-C-(indol-3-yl)glycerol 3-phosphate + CO2 + H2O. The protein operates within amino-acid biosynthesis; L-tryptophan biosynthesis; L-tryptophan from chorismate: step 4/5. The chain is Indole-3-glycerol phosphate synthase from Geobacillus thermodenitrificans (strain NG80-2).